The sequence spans 486 residues: MVAVSIDSVIDISAADQSTAASGVAIKDELPNGDYILVAVDIDTTGRRLIDEIVQLAAYTPTDHFEQYIMPYMNLNPAARQRHQVRVISIGFFRMLKSMQTYKIIKSKSEVAALKDFLDWLDQLKSKNPNTDGIVLLYHEERKFIPYMILQSLVKYGMLDRFTKTVKSFVNSFNLAKSSIGDTKHYSLRNLSKILSKAKEDNARVDNDNEADSNSSSADKHVKNGLQKERDEFDGSASVRAKLTFNVALQLSNLDSTEPESSEALSNLFNALKPFTEAISGDVKELDTQNVHLERQNSFRPVFLNYFKTTLYHRVRAVKFRIVLAENGFDLTTLNDIWTEKRIEGLDAALQGIASLKAEDKNELVELLDSFFDPAKVTIKPIIKPSTIRRRNKRNTPAHKPGVGSGSRSASDEFGAGGDKSQSVSSVPDSTTKTPSPIKNGGRPQRKRNSRPSLHTKEVKSAESALNNTAPASISLPNYVPIAATN.

2 disordered regions span residues 202 to 233 and 386 to 477; these read NARVDNDNEADSNSSSADKHVKNGLQKERDEF and STIR…ISLP. The span at 218-233 shows a compositional bias: basic and acidic residues; that stretch reads ADKHVKNGLQKERDEF. Basic residues predominate over residues 387–397; the sequence is TIRRRNKRNTP. 2 stretches are compositionally biased toward polar residues: residues 420–437 and 464–476; these read KSQSVSSVPDSTTKTPSP and SALNNTAPASISL.

In terms of biological role, ensures the proper localization of the mRNA of the bicoid gene to the anterior regions of the oocyte thus playing a fundamental role in the establishment of the polarity of the oocyte. May bind the bcd mRNA. The sequence is that of Maternal protein exuperantia (exu) from Drosophila virilis (Fruit fly).